Consider the following 343-residue polypeptide: tRNA N6-adenosine threonylcarbamoyltransferase (343 aa).

Fe cation contacts are provided by histidine 114 and histidine 118. Residues 137-141, aspartate 171, glycine 184, aspartate 188, and asparagine 278 contribute to the substrate site; that span reads LVSGG. Aspartate 306 is a binding site for Fe cation.

This sequence belongs to the KAE1 / TsaD family. Fe(2+) is required as a cofactor.

The protein resides in the cytoplasm. It carries out the reaction L-threonylcarbamoyladenylate + adenosine(37) in tRNA = N(6)-L-threonylcarbamoyladenosine(37) in tRNA + AMP + H(+). Its function is as follows. Required for the formation of a threonylcarbamoyl group on adenosine at position 37 (t(6)A37) in tRNAs that read codons beginning with adenine. Is involved in the transfer of the threonylcarbamoyl moiety of threonylcarbamoyl-AMP (TC-AMP) to the N6 group of A37, together with TsaE and TsaB. TsaD likely plays a direct catalytic role in this reaction. In Acidothermus cellulolyticus (strain ATCC 43068 / DSM 8971 / 11B), this protein is tRNA N6-adenosine threonylcarbamoyltransferase.